The following is a 641-amino-acid chain: Chaperone protein DnaK (641 aa).

Residue threonine 201 is modified to Phosphothreonine; by autocatalysis. Residues 604–622 (ASAEQGGAAPGADAGNAGK) show a composition bias toward low complexity. A disordered region spans residues 604 to 625 (ASAEQGGAAPGADAGNAGKAQD).

The protein belongs to the heat shock protein 70 family.

Acts as a chaperone. This is Chaperone protein DnaK from Stenotrophomonas maltophilia (strain R551-3).